The following is a 107-amino-acid chain: U1-lycotoxin-Ls1b (107 aa).

A signal peptide spans Met-1–Ser-20. The propeptide occupies Glu-21 to Arg-41. Cystine bridges form between Cys-44-Cys-59, Cys-51-Cys-68, Cys-58-Cys-86, and Cys-70-Cys-84.

This sequence belongs to the neurotoxin 19 (CSTX) family. 04 (U1-Lctx) subfamily. In terms of tissue distribution, expressed by the venom gland.

It is found in the secreted. The polypeptide is U1-lycotoxin-Ls1b (Lycosa singoriensis (Wolf spider)).